Reading from the N-terminus, the 514-residue chain is Endogenous retrovirus group PABLB member 1 Env polyprotein (514 aa).

N58 is a glycosylation site (N-linked (GlcNAc...) asparagine). The tract at residues 60-316 (STSNVFLQWA…YPYLPHVVNQ (257 aa)) is surface protein. Residues 82–85 (CWVC) carry the CXXC motif. Residues N133, N140, N155, N218, N226, and N267 are each glycosylated (N-linked (GlcNAc...) asparagine). Residues 317 to 514 (GTRAIVHRND…QRDIFHSNAP (198 aa)) form a transmembrane protein region. The tract at residues 328–348 (LPTIFMPSVGLGTVIQHIEAL) is fusion peptide. Residues N350 and N357 are each glycosylated (N-linked (GlcNAc...) asparagine). The short motif at 378–394 (LQNRMALDILTAAEGGT) is the CKS-17 element. Cysteines 395 and 402 form a disulfide. Positions 395-403 (CALIKTECC) match the CX6CC motif. N408 and N412 each carry an N-linked (GlcNAc...) asparagine glycan. The chain crosses the membrane as a helical span at residues 452–472 (ILIVLATLWSVGIALCCGLYF).

It belongs to the gamma type-C retroviral envelope protein family. HERV class-I R(b) env subfamily. Post-translationally, the CXXC motif is highly conserved across a broad range of retroviral envelope proteins. It is thought to participate in the formation of a labile disulfide bond possibly with the CX6CC motif present in the transmembrane domain. Low expression in placenta and testis.

Its subcellular location is the cell membrane. Retroviral envelope proteins mediate receptor recognition and membrane fusion during early infection. Endogenous envelope proteins may have kept, lost or modified their original function during evolution. This endogenous envelope protein has lost its original fusogenic properties. The polypeptide is Endogenous retrovirus group PABLB member 1 Env polyprotein (ERVPABLB-1) (Homo sapiens (Human)).